Consider the following 699-residue polypeptide: Protein Scribble homolog let-413 (699 aa).

LRR repeat units lie at residues 37 to 59 (KLEDLNLTMNNIKELDHRLFSLR), 60 to 81 (HLRILDVSDNELAVLPAEIGNL), 83 to 104 (QLIELNLNRNSIAKLPDTMQNC), 106 to 127 (LLTTLNLSSNPFTRLPETICEC), 129 to 150 (SITILSLNETSLTLLPSNIGSL), 152 to 174 (NLRVLEARDNLLRTIPLSIVELR), 175 to 196 (KLEELDLGQNELEALPAEIGKL), 198 to 219 (SLREFYVDINSLTSLPDSISGC), 221 to 242 (MLDQLDVSENQIIRLPENLGRM), 244 to 265 (NLTDLNISINEIIELPSSFGEL), 267 to 288 (RLQMLKADRNSLHNLTSEIGKC), 290 to 311 (SLTELYLGQNFLTDLPDTIGDL), 313 to 334 (QLTTLNVDCNNLSDIPDTIGNC), 336 to 357 (SLTVLSLRQNILTELPMTIGKC), 359 to 380 (NLTVLDVASNKLPHLPFTVKVL), and 382 to 403 (KLQALWLSENQTQSILKLSETR). Residues 584 to 665 (AGGTSNDPAP…RSPSPVSRTS (82 aa)) enclose the PDZ domain. The disordered stretch occupies residues 656-699 (RSPSPVSRTSEPSLNGSSHQLNHFDAGSPDSTMFVTSSTPVYAS). Polar residues-rich tracts occupy residues 659 to 676 (SPVSRTSEPSLNGSSHQL) and 684 to 699 (PDSTMFVTSSTPVYAS).

It belongs to the LAP (LRR and PDZ) protein family. As to expression, expressed in the terminal web of the intestine. Expressed in seam cells. Expressed in the basolateral surfaces of epithelia and the nervous system. Expressed in the intestine, epidermis, excretory canal, reproductive system including vulva, uterus and spermatheca, in both larval and adult stage animals.

Its subcellular location is the basolateral cell membrane. Its function is as follows. Critical role in assembling adherens junctions; adapter protein involved in polarizing protein trafficking in epithelial cells. Necessary to maintain, not establish, the entire terminal web (organelle-depleted, intermediate filament-rich layer of cytoplasm that underlies the apical microvilli of polarized epithelial cells) or brush border assembly at the apical surface gut cells. Required for correct localization of ifb-2 intermediate filaments in the terminal web. Required for dlg-1 and hmr-1 lateral localization. Maintains cell polarity by correctly positioning adherens junction protein components including ajm-1 and hmp-1 at discrete subapical positions. Plays a role in the correct localization of the dlg-1-ajm-1 complex, polarity protein par-3, and actin microfilament to the apical junction of spermatheca cells, and is required for ovulation. Regulates the establishment of newly-formed epithelia in conjunction with dlg-1. Required in the epidermis during larval development. Plays a role in cellular junction integrity and in the directed outgrowth of seam cells, towards neighboring seam cells, during larval development; probably acts by promoting the assembly and stability of dlg-1 at apical junctions. The protein is Protein Scribble homolog let-413 of Caenorhabditis elegans.